The primary structure comprises 122 residues: Large ribosomal subunit protein uL14 (122 aa).

Belongs to the universal ribosomal protein uL14 family. Part of the 50S ribosomal subunit. Forms a cluster with proteins L3 and L19. In the 70S ribosome, L14 and L19 interact and together make contacts with the 16S rRNA in bridges B5 and B8.

Functionally, binds to 23S rRNA. Forms part of two intersubunit bridges in the 70S ribosome. The chain is Large ribosomal subunit protein uL14 from Hahella chejuensis (strain KCTC 2396).